The chain runs to 550 residues: Chaperonin GroEL (550 aa).

ATP contacts are provided by residues 30–33, K51, 87–91, G415, 479–481, and D495; these read TLGP, DGTTT, and NAA.

This sequence belongs to the chaperonin (HSP60) family. In terms of assembly, forms a cylinder of 14 subunits composed of two heptameric rings stacked back-to-back. Interacts with the co-chaperonin GroES.

It is found in the cytoplasm. The catalysed reaction is ATP + H2O + a folded polypeptide = ADP + phosphate + an unfolded polypeptide.. Together with its co-chaperonin GroES, plays an essential role in assisting protein folding. The GroEL-GroES system forms a nano-cage that allows encapsulation of the non-native substrate proteins and provides a physical environment optimized to promote and accelerate protein folding. This chain is Chaperonin GroEL, found in Marinobacter nauticus (strain ATCC 700491 / DSM 11845 / VT8) (Marinobacter aquaeolei).